A 446-amino-acid polypeptide reads, in one-letter code: MYQQKYLISSVSDSNQNGFSLHKNSFSYHFYSQMVSEGFGVILEISFSSRLVSSLEEKRIPKSQNLRSIHSIFPFLEDKLSHLNYVSDLLIPYPIHMEILVQILQCWIKDVPSLHLLRFIFHEYHNLNSLITSKKSIYVFSKRKKRFLWFLHNFYVYECEYIFLFLRKQSSYLRSISSGVFLERTHFYGKIEYLRVMSCNSFQRILWFLKDIFIHYVRYQGKAILVSKGTLILMNKWKFHFVNFWQFYFHFWFQPYRIRIKQLPNYSFSFMGYFSSVLKNPLVVRNQMLENSFLINTLTNKLDTIAPVIFLIRSLSKAQFCTVLGHPISKSIWTNLSDSDILDRFCRICRNLCRYHSGSSKKQVLYRIKYILRLSCARTLARKHKSTVRTFMRRLGSAFLEEFFFEEEQSLSLVFLQKIPFLLHGLNRERIWYLDIIRMNDLVDHS.

This sequence belongs to the intron maturase 2 family. MatK subfamily.

It is found in the plastid. The protein resides in the chloroplast. Functionally, usually encoded in the trnK tRNA gene intron. Probably assists in splicing its own and other chloroplast group II introns. The chain is Maturase K from Phalaenopsis aphrodite subsp. formosana (Moth orchid).